We begin with the raw amino-acid sequence, 188 residues long: Elongation factor P-like protein (188 aa).

This sequence belongs to the elongation factor P family.

The sequence is that of Elongation factor P-like protein from Xylella fastidiosa (strain M23).